The primary structure comprises 564 residues: Formate--tetrahydrofolate ligase (564 aa).

65-72 serves as a coordination point for ATP; sequence TPLGEGKT.

Belongs to the formate--tetrahydrofolate ligase family.

The enzyme catalyses (6S)-5,6,7,8-tetrahydrofolate + formate + ATP = (6R)-10-formyltetrahydrofolate + ADP + phosphate. It participates in one-carbon metabolism; tetrahydrofolate interconversion. In Roseiflexus sp. (strain RS-1), this protein is Formate--tetrahydrofolate ligase.